Here is a 125-residue protein sequence, read N- to C-terminus: MITIDFQKMGGLIPAIIQDHATNEVLMVAFMDEKTLNLTLESGKTWFFSRSRNKYWMKGEESGNTQEVVEVLTDCDADAVVIKVKQNGPAACHTGNRSCFYVRWEDGQWVEHSEPLFDPAEVYKK.

Asp74 contacts Mg(2+). Position 75 (Cys75) interacts with Zn(2+). Residues Asp76 and Asp78 each coordinate Mg(2+). Zn(2+) is bound by residues Cys92 and Cys99.

Belongs to the PRA-CH family. As to quaternary structure, homodimer. It depends on Mg(2+) as a cofactor. Requires Zn(2+) as cofactor.

It is found in the cytoplasm. It carries out the reaction 1-(5-phospho-beta-D-ribosyl)-5'-AMP + H2O = 1-(5-phospho-beta-D-ribosyl)-5-[(5-phospho-beta-D-ribosylamino)methylideneamino]imidazole-4-carboxamide. It functions in the pathway amino-acid biosynthesis; L-histidine biosynthesis; L-histidine from 5-phospho-alpha-D-ribose 1-diphosphate: step 3/9. In terms of biological role, catalyzes the hydrolysis of the adenine ring of phosphoribosyl-AMP. This Geobacter sulfurreducens (strain ATCC 51573 / DSM 12127 / PCA) protein is Phosphoribosyl-AMP cyclohydrolase.